Reading from the N-terminus, the 270-residue chain is ATP synthase subunit a (270 aa).

5 helical membrane-spanning segments follow: residues 38-58 (VHID…GIFY), 98-118 (IAPL…MDLV), 143-163 (DVNI…YYSI), 208-228 (LFGN…MLPW), and 239-259 (AIFH…LTIV).

The protein belongs to the ATPase A chain family. As to quaternary structure, F-type ATPases have 2 components, CF(1) - the catalytic core - and CF(0) - the membrane proton channel. CF(1) has five subunits: alpha(3), beta(3), gamma(1), delta(1), epsilon(1). CF(0) has three main subunits: a(1), b(2) and c(9-12). The alpha and beta chains form an alternating ring which encloses part of the gamma chain. CF(1) is attached to CF(0) by a central stalk formed by the gamma and epsilon chains, while a peripheral stalk is formed by the delta and b chains.

The protein resides in the cell inner membrane. Its function is as follows. Key component of the proton channel; it plays a direct role in the translocation of protons across the membrane. This is ATP synthase subunit a from Vibrio alginolyticus.